The sequence spans 511 residues: ATP synthase subunit alpha (511 aa).

169–176 (GDRQTGKT) is an ATP binding site.

This sequence belongs to the ATPase alpha/beta chains family. In terms of assembly, F-type ATPases have 2 components, CF(1) - the catalytic core - and CF(0) - the membrane proton channel. CF(1) has five subunits: alpha(3), beta(3), gamma(1), delta(1), epsilon(1). CF(0) has three main subunits: a(1), b(2) and c(9-12). The alpha and beta chains form an alternating ring which encloses part of the gamma chain. CF(1) is attached to CF(0) by a central stalk formed by the gamma and epsilon chains, while a peripheral stalk is formed by the delta and b chains.

The protein resides in the cell inner membrane. It catalyses the reaction ATP + H2O + 4 H(+)(in) = ADP + phosphate + 5 H(+)(out). In terms of biological role, produces ATP from ADP in the presence of a proton gradient across the membrane. The alpha chain is a regulatory subunit. This is ATP synthase subunit alpha from Bartonella quintana (strain Toulouse) (Rochalimaea quintana).